The sequence spans 308 residues: Ribosomal RNA small subunit methyltransferase H (308 aa).

S-adenosyl-L-methionine is bound by residues G34–H36, D54, F80, D101, and Q108.

This sequence belongs to the methyltransferase superfamily. RsmH family.

The protein resides in the cytoplasm. The catalysed reaction is cytidine(1402) in 16S rRNA + S-adenosyl-L-methionine = N(4)-methylcytidine(1402) in 16S rRNA + S-adenosyl-L-homocysteine + H(+). In terms of biological role, specifically methylates the N4 position of cytidine in position 1402 (C1402) of 16S rRNA. In Ureaplasma urealyticum serovar 10 (strain ATCC 33699 / Western), this protein is Ribosomal RNA small subunit methyltransferase H.